The chain runs to 606 residues: Phosphoenolpyruvate carboxykinase [GTP] (606 aa).

Substrate is bound by residues Arg79 and 218 to 220 (YGG). The Mn(2+) site is built by Lys227 and His247. Ser269 lines the substrate pocket. GTP is bound at residue 270–275 (ACGKTN). Cys271 is a catalytic residue. Asp294 is a Mn(2+) binding site. 384 to 386 (NSR) is a binding site for substrate. GTP is bound by residues Arg386, Arg417, and 512–515 (FGEN).

Belongs to the phosphoenolpyruvate carboxykinase [GTP] family. In terms of assembly, monomer. It depends on Mn(2+) as a cofactor.

The protein resides in the cytoplasm. It carries out the reaction oxaloacetate + GTP = phosphoenolpyruvate + GDP + CO2. The protein operates within carbohydrate biosynthesis; gluconeogenesis. Catalyzes the conversion of oxaloacetate (OAA) to phosphoenolpyruvate (PEP), the rate-limiting step in the metabolic pathway that produces glucose from lactate and other precursors derived from the citric acid cycle. The protein is Phosphoenolpyruvate carboxykinase [GTP] of Corynebacterium jeikeium (strain K411).